Here is an 88-residue protein sequence, read N- to C-terminus: Large ribosomal subunit protein bL27 (88 aa).

The protein belongs to the bacterial ribosomal protein bL27 family.

This is Large ribosomal subunit protein bL27 from Mycobacterium leprae (strain TN).